The sequence spans 137 residues: Large ribosomal subunit protein uL16 (137 aa).

Positions 1 to 17 (MLQPKRTKFRKTHKGRN) are enriched in basic residues. The interval 1–24 (MLQPKRTKFRKTHKGRNRGLANTG) is disordered.

It belongs to the universal ribosomal protein uL16 family. In terms of assembly, part of the 50S ribosomal subunit.

In terms of biological role, binds 23S rRNA and is also seen to make contacts with the A and possibly P site tRNAs. This is Large ribosomal subunit protein uL16 from Aeromonas salmonicida (strain A449).